The primary structure comprises 100 residues: Urease subunit gamma (100 aa).

This sequence belongs to the urease gamma subunit family. In terms of assembly, heterotrimer of UreA (gamma), UreB (beta) and UreC (alpha) subunits. Three heterotrimers associate to form the active enzyme.

It is found in the cytoplasm. The catalysed reaction is urea + 2 H2O + H(+) = hydrogencarbonate + 2 NH4(+). It participates in nitrogen metabolism; urea degradation; CO(2) and NH(3) from urea (urease route): step 1/1. The polypeptide is Urease subunit gamma (Dinoroseobacter shibae (strain DSM 16493 / NCIMB 14021 / DFL 12)).